A 178-amino-acid polypeptide reads, in one-letter code: Large ribosomal subunit protein uL6 (178 aa).

Belongs to the universal ribosomal protein uL6 family. In terms of assembly, part of the 50S ribosomal subunit.

Functionally, this protein binds to the 23S rRNA, and is important in its secondary structure. It is located near the subunit interface in the base of the L7/L12 stalk, and near the tRNA binding site of the peptidyltransferase center. The protein is Large ribosomal subunit protein uL6 of Clavibacter sepedonicus (Clavibacter michiganensis subsp. sepedonicus).